A 187-amino-acid polypeptide reads, in one-letter code: Aminodeoxychorismate synthase component 2 (187 aa).

In terms of domain architecture, Glutamine amidotransferase type-1 spans M1–R187. Catalysis depends on residues C79, H168, and E170.

Monomer. Heterodimer consisting of two non-identical subunits: a glutamine amidotransferase subunit (PabA) and a aminodeoxychorismate synthase subunit (PabB).

It catalyses the reaction chorismate + L-glutamine = 4-amino-4-deoxychorismate + L-glutamate. Its pathway is cofactor biosynthesis; tetrahydrofolate biosynthesis; 4-aminobenzoate from chorismate: step 1/2. In terms of biological role, part of a heterodimeric complex that catalyzes the two-step biosynthesis of 4-amino-4-deoxychorismate (ADC), a precursor of p-aminobenzoate (PABA) and tetrahydrofolate. In the first step, a glutamine amidotransferase (PabA) generates ammonia as a substrate that, along with chorismate, is used in the second step, catalyzed by aminodeoxychorismate synthase (PabB) to produce ADC. PabA converts glutamine into glutamate only in the presence of stoichiometric amounts of PabB. In Klebsiella aerogenes (Enterobacter aerogenes), this protein is Aminodeoxychorismate synthase component 2 (pabA).